A 622-amino-acid polypeptide reads, in one-letter code: Probable ATP-citrate synthase (622 aa).

ATP contacts are provided by residues 228–248 (ALRY…ELGG) and 279–305 (FPTE…KNKA). Position 245 (glutamate 245) interacts with Mg(2+). Residue histidine 287 is the Tele-phosphohistidine intermediate of the active site. Residue 306–316 (LREAGAVVPTS) participates in CoA binding.

In the N-terminal section; belongs to the succinate/malate CoA ligase beta subunit family. The protein in the C-terminal section; belongs to the succinate/malate CoA ligase alpha subunit family. In terms of assembly, homotetramer.

It is found in the cytoplasm. The enzyme catalyses oxaloacetate + acetyl-CoA + ADP + phosphate = citrate + ATP + CoA. In terms of biological role, catalyzes the cleavage of citrate into oxaloacetate and acetyl-CoA, the latter serving as common substrate in multiple biochemical reactions in protein, carbohydrate and lipid metabolism. The sequence is that of Probable ATP-citrate synthase (acly) from Dictyostelium discoideum (Social amoeba).